Consider the following 155-residue polypeptide: NADPH-dependent 7-cyano-7-deazaguanine reductase (155 aa).

The Thioimide intermediate role is filled by cysteine 53. The active-site Proton donor is the aspartate 60. Substrate-binding positions include 75–77 and 94–95; these read VES and HE.

The protein belongs to the GTP cyclohydrolase I family. QueF type 1 subfamily.

Its subcellular location is the cytoplasm. The enzyme catalyses 7-aminomethyl-7-carbaguanine + 2 NADP(+) = 7-cyano-7-deazaguanine + 2 NADPH + 3 H(+). It functions in the pathway tRNA modification; tRNA-queuosine biosynthesis. Functionally, catalyzes the NADPH-dependent reduction of 7-cyano-7-deazaguanine (preQ0) to 7-aminomethyl-7-deazaguanine (preQ1). This is NADPH-dependent 7-cyano-7-deazaguanine reductase from Hyphomonas neptunium (strain ATCC 15444).